We begin with the raw amino-acid sequence, 182 residues long: Dual-action ribosomal maturation protein DarP (182 aa).

Positions Met1–Glu20 are disordered.

Belongs to the DarP family.

It is found in the cytoplasm. Functionally, member of a network of 50S ribosomal subunit biogenesis factors which assembles along the 30S-50S interface, preventing incorrect 23S rRNA structures from forming. Promotes peptidyl transferase center (PTC) maturation. This chain is Dual-action ribosomal maturation protein DarP, found in Sodalis glossinidius (strain morsitans).